The chain runs to 226 residues: Ribonuclease 3 (226 aa).

The RNase III domain maps to 6 to 128 (INRLQRKLGY…LIGGVFLDSD (123 aa)). Glu-41 provides a ligand contact to Mg(2+). Residue Asp-45 is part of the active site. Asp-114 and Glu-117 together coordinate Mg(2+). The active site involves Glu-117. The DRBM domain occupies 155–225 (DPKTRLQEFL…AEQALIKLEL (71 aa)).

This sequence belongs to the ribonuclease III family. Homodimer. Mg(2+) is required as a cofactor.

It is found in the cytoplasm. It carries out the reaction Endonucleolytic cleavage to 5'-phosphomonoester.. Functionally, digests double-stranded RNA. Involved in the processing of primary rRNA transcript to yield the immediate precursors to the large and small rRNAs (23S and 16S). Processes some mRNAs, and tRNAs when they are encoded in the rRNA operon. Processes pre-crRNA and tracrRNA of type II CRISPR loci if present in the organism. The protein is Ribonuclease 3 of Serratia proteamaculans (strain 568).